The primary structure comprises 87 residues: Probable Fe(2+)-trafficking protein (87 aa).

Belongs to the Fe(2+)-trafficking protein family.

Functionally, could be a mediator in iron transactions between iron acquisition and iron-requiring processes, such as synthesis and/or repair of Fe-S clusters in biosynthetic enzymes. The protein is Probable Fe(2+)-trafficking protein of Francisella tularensis subsp. holarctica (strain FTNF002-00 / FTA).